The following is a 245-amino-acid chain: NAD-dependent protein deacylase (245 aa).

In terms of domain architecture, Deacetylase sirtuin-type spans 1–237; sequence MNFPYRNIVV…PKLVEELLAH (237 aa). NAD(+) is bound at residue 13–32; it reads GAGISAESGIQTFRAQDGLW. Tyr-57 and Arg-60 together coordinate substrate. Position 94 to 97 (94 to 97) interacts with NAD(+); it reads QNID. Catalysis depends on His-112, which acts as the Proton acceptor. The Zn(2+) site is built by Cys-120 and Cys-139. Residues 179 to 181, 205 to 207, and Ala-223 each bind NAD(+); these read GTS and NLE.

It belongs to the sirtuin family. Class III subfamily. Zn(2+) serves as cofactor.

It localises to the cytoplasm. The enzyme catalyses N(6)-acetyl-L-lysyl-[protein] + NAD(+) + H2O = 2''-O-acetyl-ADP-D-ribose + nicotinamide + L-lysyl-[protein]. It carries out the reaction N(6)-succinyl-L-lysyl-[protein] + NAD(+) + H2O = 2''-O-succinyl-ADP-D-ribose + nicotinamide + L-lysyl-[protein]. Functionally, NAD-dependent lysine deacetylase and desuccinylase that specifically removes acetyl and succinyl groups on target proteins. Modulates the activities of several proteins which are inactive in their acylated form. This chain is NAD-dependent protein deacylase, found in Vibrio vulnificus (strain CMCP6).